Here is a 453-residue protein sequence, read N- to C-terminus: uncharacterized protein (453 aa).

[4Fe-4S] cluster-binding residues include cysteine 74, cysteine 80, cysteine 83, and cysteine 162. Residues glutamine 286, tyrosine 315, glutamate 336, and aspartate 384 each contribute to the S-adenosyl-L-methionine site. Cysteine 411 acts as the Nucleophile in catalysis.

The protein belongs to the class I-like SAM-binding methyltransferase superfamily. RNA M5U methyltransferase family.

This is an uncharacterized protein from Staphylococcus aureus (strain MW2).